Reading from the N-terminus, the 336-residue chain is MPKSALMSSSFQTSVSPRPLPVSCASRTAARKLSLYCSEGRTRCGMGQGKGWRWPGHRPPGLPSPTNRVGQSVPKWRPQPHKAAGGGRTIRDVKEAAFDVLDLGLLPYPQAWARQKQELARVAVGGRPTLLLVEHPAVLTLGRKAQEGENIVVTREYLAAQGIDVFAVERGGDVTYHGPGQLVAYAIFPVGRRVRDFLRLLENAVVTALGTLGLPDARPNPGYAGVYVDPREINGKTYDQKICSIGVAIKQNVALHGIGLNVCTNLDHFDLIVPCGLTDTQMTSVQREYDLRGLGSVSMEQAKKALTDAFALTFADYDWSLPGVAAGQEALSVASP.

A compositionally biased stretch (polar residues) spans 1-16; it reads MPKSALMSSSFQTSVS. Disordered regions lie at residues 1-22 and 48-88; these read MPKS…PLPV and QGKG…GGGR. The tract at residues 1–92 is unknown; the sequence is MPKSALMSSS…AAGGGRTIRD (92 aa). The interval 93 to 336 is lipB domain; sequence VKEAAFDVLD…GQEALSVASP (244 aa). Positions 124–318 constitute a BPL/LPL catalytic domain; sequence VGGRPTLLLV…AFALTFADYD (195 aa). Residues 170–177, 244–246, and 257–259 contribute to the substrate site; these read RGGDVTYH, SIG, and GIG. Cysteine 275 (acyl-thioester intermediate) is an active-site residue.

In the C-terminal section; belongs to the LipB family.

The protein localises to the cytoplasm. It carries out the reaction octanoyl-[ACP] + L-lysyl-[protein] = N(6)-octanoyl-L-lysyl-[protein] + holo-[ACP] + H(+). It participates in protein modification; protein lipoylation via endogenous pathway; protein N(6)-(lipoyl)lysine from octanoyl-[acyl-carrier-protein]: step 1/2. Its function is as follows. Catalyzes the transfer of endogenously produced octanoic acid from octanoyl-acyl-carrier-protein onto the lipoyl domains of lipoate-dependent enzymes. Lipoyl-ACP can also act as a substrate although octanoyl-ACP is likely to be the physiological substrate. This is Octanoyltransferase from Deinococcus radiodurans (strain ATCC 13939 / DSM 20539 / JCM 16871 / CCUG 27074 / LMG 4051 / NBRC 15346 / NCIMB 9279 / VKM B-1422 / R1).